The primary structure comprises 511 residues: MTSTPKPLVLIILDGFGHSESPEYNAIFAANTPVYDRLRATQPHGLISGSGMDVGLPDGQMGNSEVGHMNLGAGRVVYQDFTRVTKAIRDGEFFENPVLTGAVDKAASAGKAVHILGLLSDGGVHSHQDHLIAMAELAAQRGAEKIYLHAFLDGRDTPPRSAQSSIELLDATFAKLGKGRIASLIGRYYAMDRDNRWDRVSAAYNLIVDSAAEYTADSALAGLQAAYAREENDEFVKATRIGEAVKVEDGDAVIFMNFRADRARELSRAFVEPDFNEFPRARLPKLAAYIGLTQYSAKIPAPAAFAPSSLDNVLGEYLAKNGKTQLRIAETEKYAHVTFFFSGGREEPFEGEERILIPSPKVATYDLQPEMNAPEVTDRIVEAIEQQRFDVIVVNYANGDMVGHTGVFEAAVKAVEALDSCVGRIVEALGKVGGEALITADHGNVEQMEDECTGQAHTAHTSEPVPFIYVGKRKVTVREGGVLADVAPTMLKLLGLEKPAEMTGTSILVDA.

Mn(2+) is bound by residues Asp-14 and Ser-64. Residue Ser-64 is the Phosphoserine intermediate of the active site. Substrate contacts are provided by residues His-125, Arg-155–Asp-156, Arg-187, Arg-193, Arg-259–Arg-262, and Lys-333. Residues Asp-400, His-404, Asp-441, His-442, and His-460 each contribute to the Mn(2+) site.

Belongs to the BPG-independent phosphoglycerate mutase family. As to quaternary structure, monomer. It depends on Mn(2+) as a cofactor.

The enzyme catalyses (2R)-2-phosphoglycerate = (2R)-3-phosphoglycerate. It functions in the pathway carbohydrate degradation; glycolysis; pyruvate from D-glyceraldehyde 3-phosphate: step 3/5. In terms of biological role, catalyzes the interconversion of 2-phosphoglycerate and 3-phosphoglycerate. In Pseudomonas entomophila (strain L48), this protein is 2,3-bisphosphoglycerate-independent phosphoglycerate mutase.